We begin with the raw amino-acid sequence, 156 residues long: ATP synthase subunit b (156 aa).

Residues 7–27 (LIGQLIAFAIFVWFCMKYVWP) traverse the membrane as a helical segment.

The protein belongs to the ATPase B chain family. As to quaternary structure, F-type ATPases have 2 components, F(1) - the catalytic core - and F(0) - the membrane proton channel. F(1) has five subunits: alpha(3), beta(3), gamma(1), delta(1), epsilon(1). F(0) has three main subunits: a(1), b(2) and c(10-14). The alpha and beta chains form an alternating ring which encloses part of the gamma chain. F(1) is attached to F(0) by a central stalk formed by the gamma and epsilon chains, while a peripheral stalk is formed by the delta and b chains.

It localises to the cell inner membrane. In terms of biological role, f(1)F(0) ATP synthase produces ATP from ADP in the presence of a proton or sodium gradient. F-type ATPases consist of two structural domains, F(1) containing the extramembraneous catalytic core and F(0) containing the membrane proton channel, linked together by a central stalk and a peripheral stalk. During catalysis, ATP synthesis in the catalytic domain of F(1) is coupled via a rotary mechanism of the central stalk subunits to proton translocation. Functionally, component of the F(0) channel, it forms part of the peripheral stalk, linking F(1) to F(0). The protein is ATP synthase subunit b of Histophilus somni (strain 129Pt) (Haemophilus somnus).